Reading from the N-terminus, the 213-residue chain is Thiamine import ATP-binding protein ThiQ (213 aa).

The region spanning 1–212 (MIELNVTFDY…EQGRIVADQL (212 aa)) is the ABC transporter domain. 31 to 38 (GESGAGKS) is an ATP binding site.

Belongs to the ABC transporter superfamily. Thiamine importer (TC 3.A.1.19.1) family. As to quaternary structure, the complex is composed of two ATP-binding proteins (ThiQ), two transmembrane proteins (ThiP) and a solute-binding protein (ThiB).

It localises to the cell inner membrane. It catalyses the reaction thiamine(out) + ATP + H2O = thiamine(in) + ADP + phosphate + H(+). Its function is as follows. Part of the ABC transporter complex ThiBPQ involved in thiamine import. Responsible for energy coupling to the transport system. The chain is Thiamine import ATP-binding protein ThiQ from Haemophilus ducreyi (strain 35000HP / ATCC 700724).